Consider the following 180-residue polypeptide: Translation initiation factor IF-3 (180 aa).

It belongs to the IF-3 family. Monomer.

It is found in the cytoplasm. IF-3 binds to the 30S ribosomal subunit and shifts the equilibrium between 70S ribosomes and their 50S and 30S subunits in favor of the free subunits, thus enhancing the availability of 30S subunits on which protein synthesis initiation begins. The chain is Translation initiation factor IF-3 from Escherichia coli (strain K12 / MC4100 / BW2952).